A 555-amino-acid polypeptide reads, in one-letter code: Zinc transporter ZIP5 (555 aa).

Residues 1–242 (MGGQTVWMTL…HSQASKTSEG (242 aa)) lie on the Extracellular side of the membrane. Residues 108–148 (KHPSQSISHSHSHEDHHPSQGTTNSPPLRESLDAKSALSGS) form a disordered region. A helical membrane pass occupies residues 243–263 (FLIALGWASLALLVISLPSLV). The Cytoplasmic segment spans residues 264-314 (ALGMAPLLQPSVLQVFLCPMAGMAVGTLCGDALLHLMPHAIFSQHTDHQNA). Residues 315–335 (VFKGLSVLGGLYLLFIFESLL) form a helical membrane-spanning segment. Residues 336–408 (GLKQHFKNLK…DGIHNLTDGL (73 aa)) are Extracellular-facing. Positions 363–374 (TSSANQNESSGH) are enriched in polar residues. Positions 363–383 (TSSANQNESSGHGHSHGQAEP) are disordered. The chain crosses the membrane as a helical span at residues 409-429 (AIGVAFSQSLTGGFSTAIAVF). Over 430-452 (CHELPHELGDLAVLLSAGWPVRR) the chain is Cytoplasmic. A helical transmembrane segment spans residues 453–473 (LLVFSGLSALLGFVGVLAGSA). At 474 to 482 (LGNHWASHS) the chain is on the extracellular side. A helical transmembrane segment spans residues 483–503 (PWILTLTAGVFLYVALADMMP). At 504–518 (EMLHGACGSVSPLKR) the chain is on the cytoplasmic side. Residues 519–539 (FLLQALGLLTGGAIMLCIALF) traverse the membrane as a helical segment. The Extracellular portion of the chain corresponds to 540-555 (EDHIAVSLGENSLGEN).

This sequence belongs to the ZIP transporter (TC 2.A.5) family.

It is found in the basolateral cell membrane. The catalysed reaction is Zn(2+)(in) = Zn(2+)(out). Functionally, uniporter that transports zinc(2+) into polarized cells of enterocytes, pancreatic acinar and endoderm cells across the basolateral membrane and participates, notably, in zinc excretion from the intestine by the uptake of zinc from the blood into the intestine. The transport mechanism is temperature- and concentration-dependent and saturable. Mediates zinc homeostasis that is essential for venous angiogenesis. This is Zinc transporter ZIP5 (slc39a5) from Danio rerio (Zebrafish).